The primary structure comprises 142 residues: Endoribonuclease YbeY (142 aa).

Residues histidine 107, histidine 111, and aspartate 117 each contribute to the Zn(2+) site.

Belongs to the endoribonuclease YbeY family. Zn(2+) is required as a cofactor.

Its subcellular location is the cytoplasm. Single strand-specific metallo-endoribonuclease involved in late-stage 70S ribosome quality control and in maturation of the 3' terminus of the 16S rRNA. The protein is Endoribonuclease YbeY of Parabacteroides distasonis (strain ATCC 8503 / DSM 20701 / CIP 104284 / JCM 5825 / NCTC 11152).